The following is a 92-amino-acid chain: UPF0250 protein Rmag_0541 (92 aa).

The protein belongs to the UPF0250 family.

The chain is UPF0250 protein Rmag_0541 from Ruthia magnifica subsp. Calyptogena magnifica.